The chain runs to 369 residues: tRNA pseudouridine synthase D (369 aa).

Aspartate 80 (nucleophile) is an active-site residue. One can recognise a TRUD domain in the interval 156-318 (GIPNWFGEQR…LKQERRALRL (163 aa)).

This sequence belongs to the pseudouridine synthase TruD family.

The catalysed reaction is uridine(13) in tRNA = pseudouridine(13) in tRNA. Responsible for synthesis of pseudouridine from uracil-13 in transfer RNAs. This is tRNA pseudouridine synthase D from Xanthomonas axonopodis pv. citri (strain 306).